A 121-amino-acid chain; its full sequence is Small ribosomal subunit protein uS13 (121 aa).

The disordered stretch occupies residues 91–121; it reads HRKGLPMRGQRTRTNARTRKGPRKAGVALKK.

The protein belongs to the universal ribosomal protein uS13 family. In terms of assembly, part of the 30S ribosomal subunit. Forms a loose heterodimer with protein S19. Forms two bridges to the 50S subunit in the 70S ribosome.

Its function is as follows. Located at the top of the head of the 30S subunit, it contacts several helices of the 16S rRNA. In the 70S ribosome it contacts the 23S rRNA (bridge B1a) and protein L5 of the 50S subunit (bridge B1b), connecting the 2 subunits; these bridges are implicated in subunit movement. Contacts the tRNAs in the A and P-sites. The chain is Small ribosomal subunit protein uS13 from Cupriavidus necator (strain ATCC 17699 / DSM 428 / KCTC 22496 / NCIMB 10442 / H16 / Stanier 337) (Ralstonia eutropha).